Consider the following 443-residue polypeptide: Protoheme IX farnesyltransferase, mitochondrial (443 aa).

A run of 7 helical transmembrane segments spans residues 174-194 (AAGF…LTSV), 235-255 (LAVS…TLGV), 257-277 (PLTG…YTPL), 280-300 (ISIA…VMGW), 309-329 (AGAF…FNAL), 364-384 (LLVL…FPIM), and 411-431 (LFFC…TCKR).

Belongs to the UbiA prenyltransferase family.

Its subcellular location is the mitochondrion membrane. The enzyme catalyses heme b + (2E,6E)-farnesyl diphosphate + H2O = Fe(II)-heme o + diphosphate. In terms of biological role, converts protoheme IX and farnesyl diphosphate to heme O. This Pongo abelii (Sumatran orangutan) protein is Protoheme IX farnesyltransferase, mitochondrial (COX10).